The primary structure comprises 107 residues: uncharacterized protein (107 aa).

This is an uncharacterized protein from Methanocaldococcus jannaschii (strain ATCC 43067 / DSM 2661 / JAL-1 / JCM 10045 / NBRC 100440) (Methanococcus jannaschii).